We begin with the raw amino-acid sequence, 191 residues long: Orotate phosphoribosyltransferase (191 aa).

114–122 (EDVITTGGS) serves as a coordination point for 5-phospho-alpha-D-ribose 1-diphosphate. Thr118 and Arg146 together coordinate orotate.

This sequence belongs to the purine/pyrimidine phosphoribosyltransferase family. PyrE subfamily. In terms of assembly, homodimer. It depends on Mg(2+) as a cofactor.

The enzyme catalyses orotidine 5'-phosphate + diphosphate = orotate + 5-phospho-alpha-D-ribose 1-diphosphate. It participates in pyrimidine metabolism; UMP biosynthesis via de novo pathway; UMP from orotate: step 1/2. Functionally, catalyzes the transfer of a ribosyl phosphate group from 5-phosphoribose 1-diphosphate to orotate, leading to the formation of orotidine monophosphate (OMP). This Caldicellulosiruptor saccharolyticus (strain ATCC 43494 / DSM 8903 / Tp8T 6331) protein is Orotate phosphoribosyltransferase.